Consider the following 111-residue polypeptide: Universal stress protein B (111 aa).

A run of 2 helical transmembrane segments spans residues Met1–Arg21 and Phe90–Trp110.

This sequence belongs to the universal stress protein B family.

The protein resides in the cell inner membrane. This chain is Universal stress protein B, found in Escherichia fergusonii (strain ATCC 35469 / DSM 13698 / CCUG 18766 / IAM 14443 / JCM 21226 / LMG 7866 / NBRC 102419 / NCTC 12128 / CDC 0568-73).